A 414-amino-acid chain; its full sequence is Serine/threonine transporter SstT (414 aa).

8 helical membrane-spanning segments follow: residues 16 to 36 (GSLV…AWIS), 46 to 66 (LGTL…LMLV), 84 to 104 (ILFL…VFSF), 143 to 163 (ALLN…GFAL), 180 to 200 (AVTF…FGLV), 219 to 239 (LVVL…LLVF), 300 to 320 (MAGA…TLGV), and 332 to 352 (VVAS…LLLI).

Belongs to the dicarboxylate/amino acid:cation symporter (DAACS) (TC 2.A.23) family.

It localises to the cell inner membrane. The catalysed reaction is L-serine(in) + Na(+)(in) = L-serine(out) + Na(+)(out). The enzyme catalyses L-threonine(in) + Na(+)(in) = L-threonine(out) + Na(+)(out). In terms of biological role, involved in the import of serine and threonine into the cell, with the concomitant import of sodium (symport system). The chain is Serine/threonine transporter SstT from Salmonella newport (strain SL254).